A 347-amino-acid chain; its full sequence is UPF0284 protein M164_0030 (347 aa).

This sequence belongs to the UPF0284 family.

This chain is UPF0284 protein M164_0030, found in Saccharolobus islandicus (strain M.16.4 / Kamchatka #3) (Sulfolobus islandicus).